We begin with the raw amino-acid sequence, 368 residues long: Quinolinate synthase (368 aa).

Positions 46 and 63 each coordinate iminosuccinate. Cysteine 110 lines the [4Fe-4S] cluster pocket. Iminosuccinate-binding positions include 141-143 (YVN) and serine 162. Residue cysteine 230 coordinates [4Fe-4S] cluster. Residues 256–258 (HPE) and threonine 273 contribute to the iminosuccinate site. Residue cysteine 320 participates in [4Fe-4S] cluster binding.

It belongs to the quinolinate synthase family. Type 3 subfamily. The cofactor is [4Fe-4S] cluster.

Its subcellular location is the cytoplasm. It carries out the reaction iminosuccinate + dihydroxyacetone phosphate = quinolinate + phosphate + 2 H2O + H(+). It participates in cofactor biosynthesis; NAD(+) biosynthesis; quinolinate from iminoaspartate: step 1/1. In terms of biological role, catalyzes the condensation of iminoaspartate with dihydroxyacetone phosphate to form quinolinate. The chain is Quinolinate synthase from Bacillus cereus (strain ATCC 14579 / DSM 31 / CCUG 7414 / JCM 2152 / NBRC 15305 / NCIMB 9373 / NCTC 2599 / NRRL B-3711).